Consider the following 163-residue polypeptide: Crossover junction endodeoxyribonuclease RuvC (163 aa).

Active-site residues include aspartate 7, glutamate 68, and histidine 142. Aspartate 7, glutamate 68, and histidine 142 together coordinate Mg(2+).

The protein belongs to the RuvC family. Homodimer which binds Holliday junction (HJ) DNA. The HJ becomes 2-fold symmetrical on binding to RuvC with unstacked arms; it has a different conformation from HJ DNA in complex with RuvA. In the full resolvosome a probable DNA-RuvA(4)-RuvB(12)-RuvC(2) complex forms which resolves the HJ. The cofactor is Mg(2+).

It is found in the cytoplasm. The enzyme catalyses Endonucleolytic cleavage at a junction such as a reciprocal single-stranded crossover between two homologous DNA duplexes (Holliday junction).. In terms of biological role, the RuvA-RuvB-RuvC complex processes Holliday junction (HJ) DNA during genetic recombination and DNA repair. Endonuclease that resolves HJ intermediates. Cleaves cruciform DNA by making single-stranded nicks across the HJ at symmetrical positions within the homologous arms, yielding a 5'-phosphate and a 3'-hydroxyl group; requires a central core of homology in the junction. The consensus cleavage sequence is 5'-(A/T)TT(C/G)-3'. Cleavage occurs on the 3'-side of the TT dinucleotide at the point of strand exchange. HJ branch migration catalyzed by RuvA-RuvB allows RuvC to scan DNA until it finds its consensus sequence, where it cleaves and resolves the cruciform DNA. This chain is Crossover junction endodeoxyribonuclease RuvC, found in Anaplasma phagocytophilum (strain HZ).